Here is a 192-residue protein sequence, read N- to C-terminus: Phosphoheptose isomerase (192 aa).

Positions Leu-37–Lys-192 constitute an SIS domain. Asn-52–Gly-54 provides a ligand contact to substrate. His-61 and Glu-65 together coordinate Zn(2+). Residues Glu-65, Asn-93–Asp-94, Ser-119–Ser-121, Ser-124, and Gln-172 each bind substrate. Positions 172 and 180 each coordinate Zn(2+).

This sequence belongs to the SIS family. GmhA subfamily. Homotetramer. It depends on Zn(2+) as a cofactor.

The protein localises to the cytoplasm. The enzyme catalyses 2 D-sedoheptulose 7-phosphate = D-glycero-alpha-D-manno-heptose 7-phosphate + D-glycero-beta-D-manno-heptose 7-phosphate. Its pathway is carbohydrate biosynthesis; D-glycero-D-manno-heptose 7-phosphate biosynthesis; D-glycero-alpha-D-manno-heptose 7-phosphate and D-glycero-beta-D-manno-heptose 7-phosphate from sedoheptulose 7-phosphate: step 1/1. Functionally, catalyzes the isomerization of sedoheptulose 7-phosphate in D-glycero-D-manno-heptose 7-phosphate. The chain is Phosphoheptose isomerase from Escherichia fergusonii (strain ATCC 35469 / DSM 13698 / CCUG 18766 / IAM 14443 / JCM 21226 / LMG 7866 / NBRC 102419 / NCTC 12128 / CDC 0568-73).